The chain runs to 417 residues: Secreted aspartic protease 4 (417 aa).

The signal sequence occupies residues 1-18 (MFLQNILSVLAFALLIDA). Residues 19 to 75 (APVKRSTGFVTLDFNVKRSLVDPKDPTVEVKRSPLFLDIEPTEIPVDDTGRNDVGKR) constitute a propeptide, activation peptide. The region spanning 89–403 (YSADITIGSN…DLDDRKISMA (315 aa)) is the Peptidase A1 domain. The active site involves Asp-107. Residue 107 to 109 (DTG) participates in pepstatin A binding. Cys-122 and Cys-134 are joined by a disulfide. The N-linked (GlcNAc...) asparagine glycan is linked to Asn-137. Residue 160 to 161 (AD) coordinates pepstatin A. Asp-267 lines the Zn(2+) pocket. Residue Asp-293 is part of the active site. A pepstatin A-binding site is contributed by 293 to 297 (DSGTT). Cys-331 and Cys-369 are oxidised to a cystine.

This sequence belongs to the peptidase A1 family. As to quaternary structure, monomer.

The protein localises to the secreted. It carries out the reaction Preferential cleavage at the carboxyl of hydrophobic amino acids, but fails to cleave 15-Leu-|-Tyr-16, 16-Tyr-|-Leu-17 and 24-Phe-|-Phe-25 of insulin B chain. Activates trypsinogen, and degrades keratin.. Activity is inhibited by squash aspartic peptidase inhibitor (SQAPI). Functionally, secreted aspartic peptidases (SAPs) are a group of ten acidic hydrolases considered as key virulence factors. These enzymes supply the fungus with nutrient amino acids as well as are able to degrade the selected host's proteins involved in the immune defense. Moreover, acts toward human hemoglobin though limited proteolysis to generate a variety of antimicrobial hemocidins, enabling to compete with the other microorganisms of the same physiological niche using the microbicidal peptides generated from the host protein. Plays a key role in defense against host by cleaving histatin-5 (Hst 5), a peptide from human saliva that carries out fungicidal activity. The cleavage rate decreases in an order of SAP2 &gt; SAP9 &gt; SAP3 &gt; SAP7 &gt; SAP4 &gt; SAP1 &gt; SAP8. The first cleavage occurs between residues 'Lys-17' and 'His-18' of Hst 5, giving DSHAKRHHGYKRKFHEK and HHSHRGY peptides. Simultaneously, the DSHAKRHHGY and KRKFHEKHHSHRGY peptides are also formed. In Candida albicans (strain SC5314 / ATCC MYA-2876) (Yeast), this protein is Secreted aspartic protease 4.